We begin with the raw amino-acid sequence, 294 residues long: uncharacterized protein (294 aa).

This is an uncharacterized protein from Methanocaldococcus jannaschii (strain ATCC 43067 / DSM 2661 / JAL-1 / JCM 10045 / NBRC 100440) (Methanococcus jannaschii).